We begin with the raw amino-acid sequence, 317 residues long: Melanocyte-stimulating hormone receptor (317 aa).

The disordered stretch occupies residues 1–28 (MPMQGAQGRLRGSLNATPPTTPHSGLAG). The Extracellular segment spans residues 1–37 (MPMQGAQGRLRGSLNATPPTTPHSGLAGNQTGPWCLE). Asn29 carries N-linked (GlcNAc...) asparagine glycosylation. A helical transmembrane segment spans residues 38–63 (VSIPDELFLSLGLVSLVENMLVVAAI). Topologically, residues 64–72 (AKNRNLHSP) are cytoplasmic. The chain crosses the membrane as a helical span at residues 73–93 (MYYFICCLAVSDLLVSVSNVL). Residues 94 to 118 (ETAVMLLLEAGVLAAWAGVVQQLDN) lie on the Extracellular side of the membrane. A helical transmembrane segment spans residues 119–140 (AIDVFICGSMVSSLCFLGAIAV). At 141–163 (DRYITIFYALRYHSIVTLPRARW) the chain is on the cytoplasmic side. The chain crosses the membrane as a helical span at residues 164–183 (AIATIWAASVVCSTLFIAYY). The Extracellular segment spans residues 184–191 (DCTAVLLC). A helical membrane pass occupies residues 192–211 (LVSFFLALVVLMAVLYMHML). Topologically, residues 212–240 (ARACLHARSIARLHKRWRPVHQGLGLKGA) are cytoplasmic. Residues 241–266 (ATLSILLGSFFLCWGPFFLHLTLIVL) form a helical membrane-spanning segment. The Extracellular segment spans residues 267–279 (CPQHPTCSCVFKN). Residues 280-300 (FKLFLTLIICNSIVDPLIYAF) traverse the membrane as a helical segment. At 301–317 (RSQELRKTLKEVLLCSW) the chain is on the cytoplasmic side. Cys315 is lipidated: S-palmitoyl cysteine.

The protein belongs to the G-protein coupled receptor 1 family. As to quaternary structure, interacts with MGRN1, but does not undergo MGRN1-mediated ubiquitination; this interaction competes with GNAS-binding and thus inhibits agonist-induced cAMP production. Interacts with OPN3; the interaction results in a decrease in MC1R-mediated cAMP signaling and ultimately a decrease in melanin production in melanocytes.

It localises to the cell membrane. Functionally, receptor for MSH (alpha, beta and gamma) and ACTH. The activity of this receptor is mediated by G proteins which activate adenylate cyclase. Mediates melanogenesis, the production of eumelanin (black/brown) and phaeomelanin (red/yellow), via regulation of cAMP signaling in melanocytes. This Mammuthus primigenius (Siberian woolly mammoth) protein is Melanocyte-stimulating hormone receptor (MC1R).